We begin with the raw amino-acid sequence, 134 residues long: Small ribosomal subunit protein uS11 (134 aa).

Disordered regions lie at residues methionine 1–alanine 22 and serine 114–valine 134. Positions alanine 9–alanine 22 are enriched in basic residues.

The protein belongs to the universal ribosomal protein uS11 family. In terms of assembly, part of the 30S ribosomal subunit. Interacts with proteins S7 and S18. Binds to IF-3.

In terms of biological role, located on the platform of the 30S subunit, it bridges several disparate RNA helices of the 16S rRNA. Forms part of the Shine-Dalgarno cleft in the 70S ribosome. This is Small ribosomal subunit protein uS11 from Streptomyces avermitilis (strain ATCC 31267 / DSM 46492 / JCM 5070 / NBRC 14893 / NCIMB 12804 / NRRL 8165 / MA-4680).